An 88-amino-acid polypeptide reads, in one-letter code: UPF0297 protein YrzL (88 aa).

The protein belongs to the UPF0297 family.

The sequence is that of UPF0297 protein YrzL (yrzL) from Bacillus subtilis (strain 168).